The following is a 280-amino-acid chain: Shikimate dehydrogenase (NADP(+)) (280 aa).

Residues serine 15 to serine 17 and threonine 62 each bind shikimate. The active-site Proton acceptor is lysine 66. 2 residues coordinate shikimate: asparagine 88 and aspartate 104. Residues glycine 128–alanine 132, asparagine 151–arginine 156, and isoleucine 222 contribute to the NADP(+) site. Residue tyrosine 224 participates in shikimate binding. Glycine 245 serves as a coordination point for NADP(+).

Belongs to the shikimate dehydrogenase family. Homodimer.

The catalysed reaction is shikimate + NADP(+) = 3-dehydroshikimate + NADPH + H(+). The protein operates within metabolic intermediate biosynthesis; chorismate biosynthesis; chorismate from D-erythrose 4-phosphate and phosphoenolpyruvate: step 4/7. Its function is as follows. Involved in the biosynthesis of the chorismate, which leads to the biosynthesis of aromatic amino acids. Catalyzes the reversible NADPH linked reduction of 3-dehydroshikimate (DHSA) to yield shikimate (SA). This chain is Shikimate dehydrogenase (NADP(+)), found in Methanosarcina barkeri (strain Fusaro / DSM 804).